The following is a 366-amino-acid chain: Chorismate synthase (366 aa).

NADP(+) is bound by residues arginine 48 and arginine 54. Residues 125 to 127 (RSS), 238 to 239 (NA), glycine 278, 293 to 297 (KPTSS), and arginine 319 each bind FMN.

This sequence belongs to the chorismate synthase family. Homotetramer. FMNH2 serves as cofactor.

It catalyses the reaction 5-O-(1-carboxyvinyl)-3-phosphoshikimate = chorismate + phosphate. It participates in metabolic intermediate biosynthesis; chorismate biosynthesis; chorismate from D-erythrose 4-phosphate and phosphoenolpyruvate: step 7/7. In terms of biological role, catalyzes the anti-1,4-elimination of the C-3 phosphate and the C-6 proR hydrogen from 5-enolpyruvylshikimate-3-phosphate (EPSP) to yield chorismate, which is the branch point compound that serves as the starting substrate for the three terminal pathways of aromatic amino acid biosynthesis. This reaction introduces a second double bond into the aromatic ring system. This Neisseria gonorrhoeae (strain ATCC 700825 / FA 1090) protein is Chorismate synthase.